Consider the following 521-residue polypeptide: 2,3-bisphosphoglycerate-independent phosphoglycerate mutase (521 aa).

D18 and S68 together coordinate Mn(2+). The active-site Phosphoserine intermediate is S68. Residues H129, 158 to 159 (RD), R190, R196, 266 to 269 (RSDR), and K343 contribute to the substrate site. Positions 410, 414, 451, 452, and 470 each coordinate Mn(2+).

Belongs to the BPG-independent phosphoglycerate mutase family. In terms of assembly, monomer. It depends on Mn(2+) as a cofactor.

It catalyses the reaction (2R)-2-phosphoglycerate = (2R)-3-phosphoglycerate. The protein operates within carbohydrate degradation; glycolysis; pyruvate from D-glyceraldehyde 3-phosphate: step 3/5. In terms of biological role, catalyzes the interconversion of 2-phosphoglycerate and 3-phosphoglycerate. The protein is 2,3-bisphosphoglycerate-independent phosphoglycerate mutase of Hydrogenovibrio crunogenus (strain DSM 25203 / XCL-2) (Thiomicrospira crunogena).